A 25-amino-acid chain; its full sequence is Antimicrobial peptide THP3 (25 aa).

The protein localises to the secreted. Functionally, bactericidal activity; inhibits Staphylococcus aureus. The sequence is that of Antimicrobial peptide THP3 from Meleagris gallopavo (Wild turkey).